A 114-amino-acid chain; its full sequence is PDZK1-interacting protein 1 (114 aa).

Topologically, residues 1-28 are extracellular; the sequence is MSVLSLVVLSLLMALPPASCQQGRGNLQ. The helical transmembrane segment at 29–51 threads the bilayer; the sequence is PWMQGLIAVAVFLVLVAIAFAVN. Over 52-114 the chain is Cytoplasmic; it reads HFWCQEKPAP…EEGKVCSTPM (63 aa). The residue at position 85 (Ser-85) is a Phosphoserine.

It belongs to the PDZK1-interacting protein 1/SMIM24 family. Forms a heterodimer (via N-terminal transmembrane helix) with SLC5A2/SGLT2 (via TM13); this interaction enhances SLC5A2 transporter activity. Interacts with PDZK1.

It is found in the apical cell membrane. Its function is as follows. Auxiliary protein of electrogenic Na(+)-coupled sugar symporter SLC5A2/SGLT2 and SLC5A1/SGLT1. Essential for the transporter activity of SLC5A2/SGLT2 but not SLC5A1/SGLT1. In Bos taurus (Bovine), this protein is PDZK1-interacting protein 1.